The following is a 474-amino-acid chain: tRNA-2-methylthio-N(6)-dimethylallyladenosine synthase (474 aa).

Residues 3–120 (KKLLIKTWGC…LPEMIKQSQS (118 aa)) form the MTTase N-terminal domain. Residues Cys-12, Cys-49, Cys-83, Cys-157, Cys-161, and Cys-164 each coordinate [4Fe-4S] cluster. The region spanning 143-375 (RAEGATAFVS…QQQINAQAMR (233 aa)) is the Radical SAM core domain. Residues 378–441 (RLMLGTEQRV…ANSLRGEIVR (64 aa)) enclose the TRAM domain.

It belongs to the methylthiotransferase family. MiaB subfamily. In terms of assembly, monomer. Requires [4Fe-4S] cluster as cofactor.

The protein localises to the cytoplasm. It carries out the reaction N(6)-dimethylallyladenosine(37) in tRNA + (sulfur carrier)-SH + AH2 + 2 S-adenosyl-L-methionine = 2-methylsulfanyl-N(6)-dimethylallyladenosine(37) in tRNA + (sulfur carrier)-H + 5'-deoxyadenosine + L-methionine + A + S-adenosyl-L-homocysteine + 2 H(+). Catalyzes the methylthiolation of N6-(dimethylallyl)adenosine (i(6)A), leading to the formation of 2-methylthio-N6-(dimethylallyl)adenosine (ms(2)i(6)A) at position 37 in tRNAs that read codons beginning with uridine. The chain is tRNA-2-methylthio-N(6)-dimethylallyladenosine synthase from Vibrio vulnificus (strain CMCP6).